A 428-amino-acid chain; its full sequence is Putative UDP-glucose 6-dehydrogenase YtcA (428 aa).

The first 23 residues, 1–23 (MKICVVGAGYVGLTLSAALASIG), serve as a signal peptide directing secretion. Residues 2-19 (KICVVGAGYVGLTLSAAL), Val11, Asp30, Lys35, Thr118, and Glu152 contribute to the NAD(+) site. Substrate-binding positions include 148-152 (EFLRE), Lys203, Asn207, 248-252 (FLQAG), and Gly256. The active-site Nucleophile is the Cys259. Position 262 (Lys262) interacts with NAD(+). A substrate-binding site is contributed by Lys319. Position 326 (Arg326) interacts with NAD(+).

This sequence belongs to the UDP-glucose/GDP-mannose dehydrogenase family.

It catalyses the reaction UDP-alpha-D-glucose + 2 NAD(+) + H2O = UDP-alpha-D-glucuronate + 2 NADH + 3 H(+). It functions in the pathway nucleotide-sugar biosynthesis; UDP-alpha-D-glucuronate biosynthesis; UDP-alpha-D-glucuronate from UDP-alpha-D-glucose: step 1/1. Its function is as follows. Catalyzes the conversion of UDP-glucose into UDP-glucuronate, one of the precursors of teichuronic acid. This Bacillus subtilis (strain 168) protein is Putative UDP-glucose 6-dehydrogenase YtcA (ytcA).